The chain runs to 272 residues: ATP synthase subunit a (272 aa).

5 helical membrane-spanning segments follow: residues 41-61 (VLNI…LVLF), 101-121 (VIAP…FMDL), 147-167 (DVNI…FYSI), 221-241 (LIFI…LSVP), and 243-263 (AIFH…LTIV).

The protein belongs to the ATPase A chain family. As to quaternary structure, F-type ATPases have 2 components, CF(1) - the catalytic core - and CF(0) - the membrane proton channel. CF(1) has five subunits: alpha(3), beta(3), gamma(1), delta(1), epsilon(1). CF(0) has three main subunits: a(1), b(2) and c(9-12). The alpha and beta chains form an alternating ring which encloses part of the gamma chain. CF(1) is attached to CF(0) by a central stalk formed by the gamma and epsilon chains, while a peripheral stalk is formed by the delta and b chains.

It localises to the cell inner membrane. In terms of biological role, key component of the proton channel; it plays a direct role in the translocation of protons across the membrane. The sequence is that of ATP synthase subunit a from Erwinia tasmaniensis (strain DSM 17950 / CFBP 7177 / CIP 109463 / NCPPB 4357 / Et1/99).